Consider the following 208-residue polypeptide: NADH-quinone oxidoreductase subunit I 2 (208 aa).

4Fe-4S ferredoxin-type domains lie at 79-109 (ILVE…IEGK) and 119-148 (SVFN…QTDI). Residues cysteine 88, cysteine 91, cysteine 94, cysteine 98, cysteine 128, cysteine 131, cysteine 134, and cysteine 138 each contribute to the [4Fe-4S] cluster site.

This sequence belongs to the complex I 23 kDa subunit family. NDH-1 is composed of 14 different subunits. Subunits NuoA, H, J, K, L, M, N constitute the membrane sector of the complex. [4Fe-4S] cluster serves as cofactor.

Its subcellular location is the cell inner membrane. It catalyses the reaction a quinone + NADH + 5 H(+)(in) = a quinol + NAD(+) + 4 H(+)(out). Functionally, NDH-1 shuttles electrons from NADH, via FMN and iron-sulfur (Fe-S) centers, to quinones in the respiratory chain. The immediate electron acceptor for the enzyme in this species is believed to be ubiquinone. Couples the redox reaction to proton translocation (for every two electrons transferred, four hydrogen ions are translocated across the cytoplasmic membrane), and thus conserves the redox energy in a proton gradient. The chain is NADH-quinone oxidoreductase subunit I 2 from Aquifex aeolicus (strain VF5).